Consider the following 552-residue polypeptide: Protoheme IX farnesyltransferase, mitochondrial (552 aa).

Residues 118-185 form a disordered region; the sequence is AADIPPSTST…PSGEIPPDAS (68 aa). Over residues 150 to 168 the composition is skewed to low complexity; the sequence is EQAASASSNAPSEAAQTTP. 8 consecutive transmembrane segments (helical) span residues 215-235, 245-267, 296-316, 318-338, 346-366, 387-407, 441-461, and 487-507; these read LTML…VPDF, LSPL…ANAL, AAVC…QFGV, PTVA…YTPL, TWVG…AAAG, AGGW…FMAL, VFVP…SFAV, and ARGL…LALL.

It belongs to the UbiA prenyltransferase family.

Its subcellular location is the mitochondrion membrane. It catalyses the reaction heme b + (2E,6E)-farnesyl diphosphate + H2O = Fe(II)-heme o + diphosphate. Functionally, converts protoheme IX and farnesyl diphosphate to heme O. The polypeptide is Protoheme IX farnesyltransferase, mitochondrial (COX10) (Pyricularia oryzae (strain 70-15 / ATCC MYA-4617 / FGSC 8958) (Rice blast fungus)).